Here is a 207-residue protein sequence, read N- to C-terminus: Putative zinc finger protein 137 (207 aa).

The C2H2-type 1 zinc finger occupies 72-94 (CKCNDCHKVFSNATTIANHWRIH). A C2H2-type 2; degenerate zinc finger spans residues 100–122 (YKCNKCGKIFRHRSYLAVYQRTH). The segment at 128-150 (YKYHDCGKVFSQASSYAKHRRIH) adopts a C2H2-type 3; degenerate zinc-finger fold. C2H2-type zinc fingers lie at residues 156–178 (HKCD…QRIH) and 184–206 (YKCL…QKIH).

Belongs to the krueppel C2H2-type zinc-finger protein family.

Its subcellular location is the nucleus. In terms of biological role, may be involved in transcriptional regulation. The protein is Putative zinc finger protein 137 (ZNF137P) of Homo sapiens (Human).